We begin with the raw amino-acid sequence, 272 residues long: Dermonecrotic toxin LspaSicTox-alphaII1 (272 aa).

His5 is an active-site residue. Mg(2+) is bound by residues Glu25 and Asp27. Catalysis depends on His41, which acts as the Nucleophile. 2 cysteine pairs are disulfide-bonded: Cys45-Cys51 and Cys47-Cys190. Asp85 lines the Mg(2+) pocket.

The protein belongs to the arthropod phospholipase D family. Class II subfamily. Requires Mg(2+) as cofactor. Expressed by the venom gland.

The protein localises to the secreted. It carries out the reaction an N-(acyl)-sphingosylphosphocholine = an N-(acyl)-sphingosyl-1,3-cyclic phosphate + choline. The catalysed reaction is an N-(acyl)-sphingosylphosphoethanolamine = an N-(acyl)-sphingosyl-1,3-cyclic phosphate + ethanolamine. It catalyses the reaction a 1-acyl-sn-glycero-3-phosphocholine = a 1-acyl-sn-glycero-2,3-cyclic phosphate + choline. The enzyme catalyses a 1-acyl-sn-glycero-3-phosphoethanolamine = a 1-acyl-sn-glycero-2,3-cyclic phosphate + ethanolamine. Its function is as follows. Dermonecrotic toxins cleave the phosphodiester linkage between the phosphate and headgroup of certain phospholipids (sphingolipid and lysolipid substrates), forming an alcohol (often choline) and a cyclic phosphate. This toxin acts on sphingomyelin (SM). It may also act on ceramide phosphoethanolamine (CPE), lysophosphatidylcholine (LPC) and lysophosphatidylethanolamine (LPE), but not on lysophosphatidylserine (LPS), and lysophosphatidylglycerol (LPG). It acts by transphosphatidylation, releasing exclusively cyclic phosphate products as second products. Induces dermonecrosis, hemolysis, increased vascular permeability, edema, inflammatory response, and platelet aggregation. The polypeptide is Dermonecrotic toxin LspaSicTox-alphaII1 (Loxosceles spadicea (Recluse spider)).